Reading from the N-terminus, the 232-residue chain is Single-stranded DNA-binding protein (232 aa).

2 stretches are compositionally biased toward acidic residues: residues 190–200 (GEDEWADEVED) and 216–232 (EWQE…DEDF). Residues 190-232 (GEDEWADEVEDGGYTASESRQSRDEQEWQEDEHEETPDDDEDF) are disordered. Residues 213–232 (DEQEWQEDEHEETPDDDEDF) are dimerization and interaction with the viral DNA polymerase and helicase.

The protein belongs to the Teseptimavirus single-stranded DNA-binding protein family. Homodimer. Interacts (via C-terminus) with the viral DNA polymerase. Interacts with the viral helicase/primase. Part of the replicase complex that includes the DNA polymerase, the primase/helicase and the single-stranded DNA binding protein.

Functionally, single-stranded DNA-binding protein that participates in viral DNA replication, formation of concatemers, recombination and repair of double-stranded breaks. Coats the lagging-strand ssDNA as the replication fork advances and stimulates the activities of viral DNA polymerase and primase/helicase. Coordinates simultaneous synthesis of leading- and lagging-strands. Together with DNA primase/helicase, promotes pairing of two homologous DNA molecules containing complementary single-stranded regions and mediates homologous DNA strand exchange. Also promotes the formation of joint molecules. Disrupts loops, hairpins and other secondary structures present on ssDNA to reduce and eliminate pausing of viral DNA polymerase at specific sites during elongation. This is Single-stranded DNA-binding protein (2.5) from Enterobacteria phage T3 (Bacteriophage T3).